A 544-amino-acid chain; its full sequence is 4-coumarate--CoA ligase 2 (544 aa).

Residues serine 190, serine 191, glycine 192, threonine 193, threonine 194, and lysine 198 each contribute to the ATP site. Tyrosine 240 is a binding site for (E)-4-coumaroyl-AMP. Lysine 261 is a CoA binding site. The interval 263–332 is SBD1; the sequence is DIVPFLELIQ…AKFPNAKLGQ (70 aa). Residues alanine 310, glutamine 332, glycine 333, threonine 337, and methionine 345 each contribute to the (E)-4-coumaroyl-AMP site. The ATP site is built by glutamine 332, glycine 333, and threonine 337. The segment at 333–400 is SBD2; the sequence is GYGMTEAGPV…IRGDQIMKGY (68 aa). Positions 421 and 436 each coordinate ATP. Residues lysine 438 and lysine 442 each contribute to the (E)-4-coumaroyl-AMP site. CoA is bound by residues lysine 444 and glycine 445. Lysine 527 serves as a coordination point for ATP.

It belongs to the ATP-dependent AMP-binding enzyme family. Mg(2+) serves as cofactor.

It carries out the reaction (E)-4-coumarate + ATP + CoA = (E)-4-coumaroyl-CoA + AMP + diphosphate. The enzyme catalyses (E)-4-coumarate + ATP + H(+) = (E)-4-coumaroyl-AMP + diphosphate. The catalysed reaction is (E)-4-coumaroyl-AMP + CoA = (E)-4-coumaroyl-CoA + AMP + H(+). It functions in the pathway phytoalexin biosynthesis; 3,4',5-trihydroxystilbene biosynthesis; 3,4',5-trihydroxystilbene from trans-4-coumarate: step 1/2. In terms of biological role, carboxylate--CoA ligase that may use 4-coumarate as substrate. Follows a two-step reaction mechanism, wherein the carboxylate substrate first undergoes adenylation by ATP, followed by a thioesterification in the presence of CoA to yield the final CoA thioester. The sequence is that of 4-coumarate--CoA ligase 2 (4CL2) from Petroselinum crispum (Parsley).